The sequence spans 68 residues: Molybdenum-pterin-binding protein 1 (68 aa).

The region spanning 2-68 (SISARNQLKG…IKSTDVMILA (67 aa)) is the Mop domain.

In terms of biological role, binds one mole of molybdenum per mole of protein and contains a pterin. The protein is Molybdenum-pterin-binding protein 1 (mopI) of Clostridium pasteurianum.